Reading from the N-terminus, the 177-residue chain is ATP synthase subunit delta (177 aa).

The protein belongs to the ATPase delta chain family. F-type ATPases have 2 components, F(1) - the catalytic core - and F(0) - the membrane proton channel. F(1) has five subunits: alpha(3), beta(3), gamma(1), delta(1), epsilon(1). F(0) has three main subunits: a(1), b(2) and c(10-14). The alpha and beta chains form an alternating ring which encloses part of the gamma chain. F(1) is attached to F(0) by a central stalk formed by the gamma and epsilon chains, while a peripheral stalk is formed by the delta and b chains.

It is found in the cell inner membrane. Functionally, f(1)F(0) ATP synthase produces ATP from ADP in the presence of a proton or sodium gradient. F-type ATPases consist of two structural domains, F(1) containing the extramembraneous catalytic core and F(0) containing the membrane proton channel, linked together by a central stalk and a peripheral stalk. During catalysis, ATP synthesis in the catalytic domain of F(1) is coupled via a rotary mechanism of the central stalk subunits to proton translocation. In terms of biological role, this protein is part of the stalk that links CF(0) to CF(1). It either transmits conformational changes from CF(0) to CF(1) or is implicated in proton conduction. The polypeptide is ATP synthase subunit delta (Shewanella halifaxensis (strain HAW-EB4)).